Consider the following 291-residue polypeptide: Oxidative stress-responsive serine-rich protein 1 (291 aa).

The disordered stretch occupies residues 29 to 139 (ISLSVGEGPS…NAGENSTSLD (111 aa)). Residues 65–83 (STRKSSRGAVRTQRRRRSK) show a composition bias toward basic residues. The segment covering 95–105 (CSTTAPPSSSQ) has biased composition (polar residues). A Phosphothreonine modification is found at threonine 143.

The chain is Oxidative stress-responsive serine-rich protein 1 (Oser1) from Mus musculus (Mouse).